We begin with the raw amino-acid sequence, 543 residues long: CTP synthase (543 aa).

Positions 1–267 (MKQTKYIFVT…LSPIAEILDL (267 aa)) are amidoligase domain. S15 serves as a coordination point for CTP. Position 15 (S15) interacts with UTP. Residues 16-21 (SLGKGI) and D73 contribute to the ATP site. Mg(2+) contacts are provided by D73 and E141. CTP contacts are provided by residues 148–150 (DIE), 188–193 (KTKPTQ), and K224. Residues 188-193 (KTKPTQ) and K224 each bind UTP. The region spanning 292-543 (KIAFVGKYVD…IKAAINYEDN (252 aa)) is the Glutamine amidotransferase type-1 domain. G354 is a binding site for L-glutamine. C381 acts as the Nucleophile; for glutamine hydrolysis in catalysis. L-glutamine-binding positions include 382 to 385 (LGMQ), E405, and R473. Catalysis depends on residues H516 and E518.

The protein belongs to the CTP synthase family. Homotetramer.

It carries out the reaction UTP + L-glutamine + ATP + H2O = CTP + L-glutamate + ADP + phosphate + 2 H(+). It catalyses the reaction L-glutamine + H2O = L-glutamate + NH4(+). The catalysed reaction is UTP + NH4(+) + ATP = CTP + ADP + phosphate + 2 H(+). It participates in pyrimidine metabolism; CTP biosynthesis via de novo pathway; CTP from UDP: step 2/2. Allosterically activated by GTP, when glutamine is the substrate; GTP has no effect on the reaction when ammonia is the substrate. The allosteric effector GTP functions by stabilizing the protein conformation that binds the tetrahedral intermediate(s) formed during glutamine hydrolysis. Inhibited by the product CTP, via allosteric rather than competitive inhibition. Functionally, catalyzes the ATP-dependent amination of UTP to CTP with either L-glutamine or ammonia as the source of nitrogen. Regulates intracellular CTP levels through interactions with the four ribonucleotide triphosphates. In Campylobacter jejuni subsp. jejuni serotype O:6 (strain 81116 / NCTC 11828), this protein is CTP synthase.